The sequence spans 178 residues: ATP-dependent protease subunit HslV (178 aa).

Threonine 7 is an active-site residue. Positions 162, 165, and 168 each coordinate Na(+).

It belongs to the peptidase T1B family. HslV subfamily. As to quaternary structure, a double ring-shaped homohexamer of HslV is capped on each side by a ring-shaped HslU homohexamer. The assembly of the HslU/HslV complex is dependent on binding of ATP.

It is found in the cytoplasm. It carries out the reaction ATP-dependent cleavage of peptide bonds with broad specificity.. Allosterically activated by HslU binding. In terms of biological role, protease subunit of a proteasome-like degradation complex believed to be a general protein degrading machinery. The sequence is that of ATP-dependent protease subunit HslV from Burkholderia ambifaria (strain MC40-6).